Reading from the N-terminus, the 451-residue chain is UPF0210 protein Asuc_1169 (451 aa).

This sequence belongs to the UPF0210 family. Homodimer.

The chain is UPF0210 protein Asuc_1169 from Actinobacillus succinogenes (strain ATCC 55618 / DSM 22257 / CCUG 43843 / 130Z).